The chain runs to 402 residues: Deoxyguanosinetriphosphate triphosphohydrolase-like protein (402 aa).

Residues 73 to 217 (RLTHTIEVAQ…AAIADDIAYN (145 aa)) enclose the HD domain.

Belongs to the dGTPase family. Type 2 subfamily.

This chain is Deoxyguanosinetriphosphate triphosphohydrolase-like protein, found in Brucella anthropi (strain ATCC 49188 / DSM 6882 / CCUG 24695 / JCM 21032 / LMG 3331 / NBRC 15819 / NCTC 12168 / Alc 37) (Ochrobactrum anthropi).